We begin with the raw amino-acid sequence, 556 residues long: Formate--tetrahydrofolate ligase (556 aa).

65 to 72 (TPAGEGKS) contributes to the ATP binding site.

This sequence belongs to the formate--tetrahydrofolate ligase family.

It carries out the reaction (6S)-5,6,7,8-tetrahydrofolate + formate + ATP = (6R)-10-formyltetrahydrofolate + ADP + phosphate. It functions in the pathway one-carbon metabolism; tetrahydrofolate interconversion. In Streptococcus equi subsp. equi (strain 4047), this protein is Formate--tetrahydrofolate ligase.